The sequence spans 2292 residues: Protein Ycf2 (2292 aa).

1640 to 1647 lines the ATP pocket; the sequence is GSIGIGRS.

It belongs to the Ycf2 family.

The protein localises to the plastid. It is found in the chloroplast stroma. Functionally, probable ATPase of unknown function. Its presence in a non-photosynthetic plant (Epifagus virginiana) and experiments in tobacco indicate that it has an essential function which is probably not related to photosynthesis. The chain is Protein Ycf2 from Liriodendron tulipifera (Tuliptree).